Here is a 1420-residue protein sequence, read N- to C-terminus: DNA-directed RNA polymerase subunit beta'' (1420 aa).

Residues Cys220, Cys295, Cys302, and Cys305 each contribute to the Zn(2+) site.

This sequence belongs to the RNA polymerase beta' chain family. RpoC2 subfamily. In plastids the minimal PEP RNA polymerase catalytic core is composed of four subunits: alpha, beta, beta', and beta''. When a (nuclear-encoded) sigma factor is associated with the core the holoenzyme is formed, which can initiate transcription. The cofactor is Zn(2+).

Its subcellular location is the plastid. The protein resides in the chloroplast. The catalysed reaction is RNA(n) + a ribonucleoside 5'-triphosphate = RNA(n+1) + diphosphate. Functionally, DNA-dependent RNA polymerase catalyzes the transcription of DNA into RNA using the four ribonucleoside triphosphates as substrates. In Adiantum capillus-veneris (Maidenhair fern), this protein is DNA-directed RNA polymerase subunit beta''.